Reading from the N-terminus, the 92-residue chain is Small ribosomal subunit protein uS19 (92 aa).

The protein belongs to the universal ribosomal protein uS19 family.

Protein S19 forms a complex with S13 that binds strongly to the 16S ribosomal RNA. The protein is Small ribosomal subunit protein uS19 of Paramagnetospirillum magneticum (strain ATCC 700264 / AMB-1) (Magnetospirillum magneticum).